The following is a 161-amino-acid chain: Regulator of ribonuclease activity A (161 aa).

It belongs to the RraA family. As to quaternary structure, homotrimer. Binds to both RNA-binding sites in the C-terminal region of Rne and to RhlB.

It localises to the cytoplasm. In terms of biological role, globally modulates RNA abundance by binding to RNase E (Rne) and regulating its endonucleolytic activity. Can modulate Rne action in a substrate-dependent manner by altering the composition of the degradosome. Modulates RNA-binding and helicase activities of the degradosome. The chain is Regulator of ribonuclease activity A from Shigella flexneri serotype 5b (strain 8401).